The following is a 1150-amino-acid chain: MSLKFIYGRSGSGKSYYCFQDIKRKIEENSDKKLILLVPEQFSFQSEKNLINYIGERAVSRAEVLSFKRMAYRVFNEVGGVTHRYMNESGKNMLLYSILNELTGELKIFNNAANKNGFVSTLSDIITEFKRYNLTPEMIKEYLEVAEEREDNILKGKLQDIYLIYSKFQDSIRKKFIDEEENLTILADKLKESKYFDGAYIWVDEFFNFTPQEYLVLEELLLKAEKVNITLCTGGLNEGERIDNLDLFLPVKNTEEKILEFVKRNNIKYEKPIKLNCDPCYRFKNSKELSHMEKNLFAFPYKIHEKYTEDICVFQALNEYSEIEYTARDIIKLVRDNGFRYKDIAVITGDLEGYQSLIKAVFTEYGIPYFIDKKVEGDNNPLVIFILSSLEVLNKNWNYESVFRYLKAGLVDIKREEIDIIENYVLANGIRGKRWIEEKDWDYKILYGFNLTEEKEEEEEEKLKKINEIRRKITEPLIEFHNNIKGEITPKKMCLELYNFLEKMNISSKIESWIKYFKERNRLDKINEYKQIWDVAIGLMEQLVEVMKEEKLNSRTLENIFKSGFEQYELGIIPPSLDQVLVSSTKRLRSHEIKALYIVGTNDGVFPSVLDENGILSDLERENLRETGLEVAKDTKSTAFEEQFLMYVTLTTMSDYLRISYPIANEEGKTLRPSIVISRLRKIFPNLCEKSNVIKEEGDIEKISSPKPTFNEFISQLRVKEEGLELSSIWLSVYDWFMNNKEWKEKFINISQGFNHTNYAEIVDTRRVRKLYGSKLNMSVSRLEKFSQCPFAYFIRYGMNAKERKIYKVSTPDIGTLMHDVVESFSRHIEGKNISWEEIDRELCESFVSTMVDEKIKDMKGSILNSSPRYKHMTNRIKDILSKSMEVISQQISRGDFKPSAYELAFGFNGDFPPISIELSSGEKVNLIGRIDRVDKLENEDGTFIRIIDYKSGKQDFNLSDIYYGLQIQLLVYLDALLQEIEDSAKKEVNPAGILYFNMDDPLISTKKEITKEEAEKEILKKLKLKGLVLKDANIIKAMDNLISGYSDIISVRVNKDGSPSKNSSVADLEDFQLLRDYVRKLIVELCEEMLEGNISIKPYKKNNYTPCGFCDYSAICQFDTSIKGSQYRFINDKKDDEVLQCIREEMKED.

Residue 8–15 coordinates ATP; that stretch reads GRSGSGKS. [4Fe-4S] cluster-binding residues include C789, C1108, C1111, and C1117.

The protein belongs to the helicase family. AddB/RexB type 1 subfamily. In terms of assembly, heterodimer of AddA and AddB. Mg(2+) serves as cofactor. It depends on [4Fe-4S] cluster as a cofactor.

The heterodimer acts as both an ATP-dependent DNA helicase and an ATP-dependent, dual-direction single-stranded exonuclease. Recognizes the chi site generating a DNA molecule suitable for the initiation of homologous recombination. The AddB subunit has 5' -&gt; 3' nuclease activity but not helicase activity. The chain is ATP-dependent helicase/deoxyribonuclease subunit B from Clostridium tetani (strain Massachusetts / E88).